A 46-amino-acid polypeptide reads, in one-letter code: Protein PsbN (46 aa).

A helical membrane pass occupies residues 7 to 27 (GLSIAITFAVILLALTGFSIY).

Belongs to the PsbN family.

The protein localises to the cellular thylakoid membrane. May play a role in photosystem I and II biogenesis. This Synechococcus elongatus (strain ATCC 33912 / PCC 7942 / FACHB-805) (Anacystis nidulans R2) protein is Protein PsbN.